The following is a 155-amino-acid chain: MPHSNISSTPRQQLTERVLQAKAANNLTWASLAEDTGLSVVYVTAALLGQHPLPQAVAEVVAERLGLDRDAVVELQTIPLRGHVEDVSSDPTIYRFHEMVQVYGTTLKALVHEQFGDGIISAINFKLDIRKVEDPEGGERAVITLDGKFLPYKPF.

Catalysis depends on residues R95, E98, and S121.

This sequence belongs to the cyanase family.

The catalysed reaction is cyanate + hydrogencarbonate + 3 H(+) = NH4(+) + 2 CO2. Its function is as follows. Catalyzes the reaction of cyanate with bicarbonate to produce ammonia and carbon dioxide. In Pseudomonas syringae pv. tomato (strain ATCC BAA-871 / DC3000), this protein is Cyanate hydratase.